Reading from the N-terminus, the 250-residue chain is GILT-like protein 1 (250 aa).

The first 21 residues, 1-21 (MSHKIAAVCLLMSCLIATAYS), serve as a signal peptide directing secretion. Asn-157 is a glycosylation site (N-linked (GlcNAc...) asparagine).

Belongs to the GILT family. In terms of processing, conjugated to URM1, a ubiquitin-like protein.

It localises to the secreted. Functionally, involved in the immune response to bacterial infection. This Drosophila melanogaster (Fruit fly) protein is GILT-like protein 1.